Here is a 430-residue protein sequence, read N- to C-terminus: uncharacterized protein (430 aa).

The first 19 residues, 1–19 (MKILLFVVLFFNVLVGIYS), serve as a signal peptide directing secretion. A glycan (N-linked (GlcNAc...) asparagine) is linked at N39. Residues 119–408 (LDPNSSPSPS…ELLEKNSDGN (290 aa)) form a disordered region. The span at 124-168 (SPSPSPSPSPSPSPSPSPSPSPSPSPSPSPSPSPSPSPSPSPSPS) shows a compositional bias: pro residues. 2 stretches are compositionally biased toward low complexity: residues 169–253 (PSSS…TPSQ) and 263–285 (PTPT…TQTP). Polar residues predominate over residues 286–303 (ISSRPMSISTEKPSSSEE). A glycan (N-linked (GlcNAc...) asparagine) is linked at N312. The segment covering 316–325 (SEDKKKDSES) has biased composition (basic and acidic residues). Residues 326 to 370 (KSSQSESPSPSASASESESASESASASTSVSVSASPLPIMDSSSS) are compositionally biased toward low complexity. N408 is a glycosylation site (N-linked (GlcNAc...) asparagine).

Its subcellular location is the secreted. This is an uncharacterized protein from Dictyostelium discoideum (Social amoeba).